The following is a 171-amino-acid chain: ATP synthase subunit b (171 aa).

The helical transmembrane segment at 10 to 30 threads the bilayer; that stretch reads GLYYGDSIFYAVCFLLLMWII.

Belongs to the ATPase B chain family. F-type ATPases have 2 components, F(1) - the catalytic core - and F(0) - the membrane proton channel. F(1) has five subunits: alpha(3), beta(3), gamma(1), delta(1), epsilon(1). F(0) has three main subunits: a(1), b(2) and c(10-14). The alpha and beta chains form an alternating ring which encloses part of the gamma chain. F(1) is attached to F(0) by a central stalk formed by the gamma and epsilon chains, while a peripheral stalk is formed by the delta and b chains.

The protein resides in the cell membrane. Its function is as follows. F(1)F(0) ATP synthase produces ATP from ADP in the presence of a proton or sodium gradient. F-type ATPases consist of two structural domains, F(1) containing the extramembraneous catalytic core and F(0) containing the membrane proton channel, linked together by a central stalk and a peripheral stalk. During catalysis, ATP synthesis in the catalytic domain of F(1) is coupled via a rotary mechanism of the central stalk subunits to proton translocation. In terms of biological role, component of the F(0) channel, it forms part of the peripheral stalk, linking F(1) to F(0). This chain is ATP synthase subunit b, found in Levilactobacillus brevis (strain ATCC 367 / BCRC 12310 / CIP 105137 / JCM 1170 / LMG 11437 / NCIMB 947 / NCTC 947) (Lactobacillus brevis).